The chain runs to 538 residues: Nicotinate phosphoribosyltransferase (538 aa).

Nicotinate-binding residues include Tyr21 and Thr210. At His213 the chain carries Phosphohistidine. Arg318 is a binding site for nicotinate. Thr380 contacts 5-phospho-alpha-D-ribose 1-diphosphate.

The protein belongs to the NAPRTase family. In terms of assembly, homodimer. It depends on Mg(2+) as a cofactor. Mn(2+) is required as a cofactor. Transiently phosphorylated on a His residue during the reaction cycle. Phosphorylation strongly increases the affinity for substrates and increases the rate of nicotinate D-ribonucleotide production. Dephosphorylation regenerates the low-affinity form of the enzyme, leading to product release.

The protein localises to the cytoplasm. It localises to the cytosol. It catalyses the reaction nicotinate + 5-phospho-alpha-D-ribose 1-diphosphate + ATP + H2O = nicotinate beta-D-ribonucleotide + ADP + phosphate + diphosphate. It functions in the pathway cofactor biosynthesis; NAD(+) biosynthesis; nicotinate D-ribonucleotide from nicotinate: step 1/1. In terms of biological role, catalyzes the first step in the biosynthesis of NAD from nicotinic acid, the ATP-dependent synthesis of beta-nicotinate D-ribonucleotide from nicotinate and 5-phospho-D-ribose 1-phosphate. Helps prevent cellular oxidative stress via its role in NAD biosynthesis. This chain is Nicotinate phosphoribosyltransferase (NAPRT), found in Bos taurus (Bovine).